Here is a 170-residue protein sequence, read N- to C-terminus: Adenine phosphoribosyltransferase (170 aa).

The protein belongs to the purine/pyrimidine phosphoribosyltransferase family. As to quaternary structure, homodimer.

The protein localises to the cytoplasm. It carries out the reaction AMP + diphosphate = 5-phospho-alpha-D-ribose 1-diphosphate + adenine. It functions in the pathway purine metabolism; AMP biosynthesis via salvage pathway; AMP from adenine: step 1/1. In terms of biological role, catalyzes a salvage reaction resulting in the formation of AMP, that is energically less costly than de novo synthesis. This chain is Adenine phosphoribosyltransferase, found in Oceanobacillus iheyensis (strain DSM 14371 / CIP 107618 / JCM 11309 / KCTC 3954 / HTE831).